Reading from the N-terminus, the 270-residue chain is 3-phenylpropionate-dihydrodiol/cinnamic acid-dihydrodiol dehydrogenase (270 aa).

10-34 is an NAD(+) binding site; sequence FITGGGSGLGLALVERFIEEGAQVA. Serine 143 serves as a coordination point for substrate. Catalysis depends on tyrosine 156, which acts as the Proton acceptor.

This sequence belongs to the short-chain dehydrogenases/reductases (SDR) family.

The catalysed reaction is 3-(cis-5,6-dihydroxycyclohexa-1,3-dien-1-yl)propanoate + NAD(+) = 3-(2,3-dihydroxyphenyl)propanoate + NADH + H(+). The enzyme catalyses (2E)-3-(cis-5,6-dihydroxycyclohexa-1,3-dien-1-yl)prop-2-enoate + NAD(+) = (2E)-3-(2,3-dihydroxyphenyl)prop-2-enoate + NADH + H(+). It participates in aromatic compound metabolism; 3-phenylpropanoate degradation. In terms of biological role, converts 3-phenylpropionate-dihydrodiol (PP-dihydrodiol) and cinnamic acid-dihydrodiol (CI-dihydrodiol) into 3-(2,3-dihydroxylphenyl)propanoic acid (DHPP) and 2,3-dihydroxicinnamic acid (DHCI), respectively. This Escherichia coli (strain ATCC 8739 / DSM 1576 / NBRC 3972 / NCIMB 8545 / WDCM 00012 / Crooks) protein is 3-phenylpropionate-dihydrodiol/cinnamic acid-dihydrodiol dehydrogenase.